A 106-amino-acid polypeptide reads, in one-letter code: MKYSLIFILTLACLIASSLARPEGEEKPADDAAGDKKEEGAEGDKTAAGGDEGFTGGDGKNAGGAGNPMKVVQDIIKKITDAVNPLRMTEGFLGGGGSGGSGALFG.

A signal peptide spans 1 to 20 (MKYSLIFILTLACLIASSLA). A disordered region spans residues 20–66 (ARPEGEEKPADDAAGDKKEEGAEGDKTAAGGDEGFTGGDGKNAGGAG). Over residues 22–45 (PEGEEKPADDAAGDKKEEGAEGDK) the composition is skewed to basic and acidic residues. Over residues 50 to 66 (GDEGFTGGDGKNAGGAG) the composition is skewed to gly residues.

The protein resides in the secreted. The sequence is that of Glycine/glutamate-rich protein sgp1 (sgp1) from Glossina morsitans morsitans (Savannah tsetse fly).